A 90-amino-acid chain; its full sequence is UPF0237 protein NMA1909 (90 aa).

In terms of domain architecture, ACT spans valine 5–isoleucine 83.

This sequence belongs to the UPF0237 family.

In Neisseria meningitidis serogroup A / serotype 4A (strain DSM 15465 / Z2491), this protein is UPF0237 protein NMA1909.